The sequence spans 715 residues: Nucleolar complex protein 2 homolog (715 aa).

Disordered regions lie at residues 17–71 (SKRI…HKLD), 85–132 (FLQQ…DKTK), and 638–715 (ERSA…SDED). Residues 89–128 (EDADLLNMEDDGDDDEDDDEDDEDEEEEESDDDEDDEEDD) show a composition bias toward acidic residues. The span at 638–660 (ERSAVENSKKDDKKKKKEEEAAA) shows a compositional bias: basic and acidic residues.

The protein belongs to the NOC2 family.

It is found in the nucleus. Required for normal somatic gonad development and for regulation of germline development and proliferation. The protein is Nucleolar complex protein 2 homolog (pro-2) of Caenorhabditis elegans.